Here is a 335-residue protein sequence, read N- to C-terminus: Phosphate acyltransferase (335 aa).

It belongs to the PlsX family. Homodimer. Probably interacts with PlsY.

It is found in the cytoplasm. It catalyses the reaction a fatty acyl-[ACP] + phosphate = an acyl phosphate + holo-[ACP]. The protein operates within lipid metabolism; phospholipid metabolism. Its function is as follows. Catalyzes the reversible formation of acyl-phosphate (acyl-PO(4)) from acyl-[acyl-carrier-protein] (acyl-ACP). This enzyme utilizes acyl-ACP as fatty acyl donor, but not acyl-CoA. This chain is Phosphate acyltransferase, found in Heliobacterium modesticaldum (strain ATCC 51547 / Ice1).